The following is a 196-amino-acid chain: Large ribosomal subunit protein bL9 (196 aa).

The tract at residues 174–196 (QAAADLLEGGAGQQASEYTEAQA) is disordered. Over residues 186-196 (QQASEYTEAQA) the composition is skewed to polar residues.

The protein belongs to the bacterial ribosomal protein bL9 family.

Its function is as follows. Binds to the 23S rRNA. This is Large ribosomal subunit protein bL9 from Phenylobacterium zucineum (strain HLK1).